We begin with the raw amino-acid sequence, 860 residues long: Protein translocase subunit SecA (860 aa).

Residues Q87, G105–T109, and D514 contribute to the ATP site. Zn(2+)-binding residues include C846, C848, C857, and C858.

It belongs to the SecA family. As to quaternary structure, monomer and homodimer. Part of the essential Sec protein translocation apparatus which comprises SecA, SecYEG and auxiliary proteins SecDF. Other proteins may also be involved. Requires Zn(2+) as cofactor.

Its subcellular location is the cell membrane. The protein resides in the cytoplasm. It catalyses the reaction ATP + H2O + cellular proteinSide 1 = ADP + phosphate + cellular proteinSide 2.. Part of the Sec protein translocase complex. Interacts with the SecYEG preprotein conducting channel. Has a central role in coupling the hydrolysis of ATP to the transfer of proteins into and across the cell membrane, serving as an ATP-driven molecular motor driving the stepwise translocation of polypeptide chains across the membrane. The protein is Protein translocase subunit SecA of Endomicrobium trichonymphae.